Here is a 193-residue protein sequence, read N- to C-terminus: Acyl carrier protein phosphodiesterase (193 aa).

This sequence belongs to the AcpH family.

The catalysed reaction is holo-[ACP] + H2O = apo-[ACP] + (R)-4'-phosphopantetheine + H(+). Converts holo-ACP to apo-ACP by hydrolytic cleavage of the phosphopantetheine prosthetic group from ACP. This chain is Acyl carrier protein phosphodiesterase, found in Enterobacter sp. (strain 638).